We begin with the raw amino-acid sequence, 350 residues long: Peroxidase 24 (350 aa).

An N-terminal signal peptide occupies residues 1–27 (MANKSLEIRFLFPLVLFLVVKLLCVDG). Cystine bridges form between Cys55-Cys135, Cys88-Cys93, Cys141-Cys346, and Cys221-Cys253. Asn73 carries an N-linked (GlcNAc...) asparagine glycan. His86 functions as the Proton acceptor in the catalytic mechanism. Residues Asp87, Val90, Gly92, Asp94, and Ser96 each contribute to the Ca(2+) site. Pro184 is a substrate binding site. Asn189 carries an N-linked (GlcNAc...) asparagine glycan. His214 contacts heme b. Thr215 contacts Ca(2+). A glycan (N-linked (GlcNAc...) asparagine) is linked at Asn230. Asp269 and Asp277 together coordinate Ca(2+).

It belongs to the peroxidase family. Classical plant (class III) peroxidase subfamily. It depends on heme b as a cofactor. Ca(2+) serves as cofactor.

It localises to the secreted. It carries out the reaction 2 a phenolic donor + H2O2 = 2 a phenolic radical donor + 2 H2O. In terms of biological role, removal of H(2)O(2), oxidation of toxic reductants, biosynthesis and degradation of lignin, suberization, auxin catabolism, response to environmental stresses such as wounding, pathogen attack and oxidative stress. These functions might be dependent on each isozyme/isoform in each plant tissue. The sequence is that of Peroxidase 24 (PER24) from Arabidopsis thaliana (Mouse-ear cress).